The chain runs to 88 residues: Small ribosomal subunit protein bS20 (88 aa).

The disordered stretch occupies residues 1 to 28 (MANIKSQIKRNRQNEKRRLRNKSVKSSL). The segment covering 7 to 23 (QIKRNRQNEKRRLRNKS) has biased composition (basic residues).

This sequence belongs to the bacterial ribosomal protein bS20 family.

Binds directly to 16S ribosomal RNA. This chain is Small ribosomal subunit protein bS20, found in Salinispora tropica (strain ATCC BAA-916 / DSM 44818 / JCM 13857 / NBRC 105044 / CNB-440).